A 209-amino-acid chain; its full sequence is Thiamine-phosphate synthase 1 (209 aa).

4-amino-2-methyl-5-(diphosphooxymethyl)pyrimidine is bound by residues Gln39–Lys43 and Asn74. Asp75 and Asp94 together coordinate Mg(2+). 4-amino-2-methyl-5-(diphosphooxymethyl)pyrimidine is bound at residue Ser112. Thr138–Ser140 is a binding site for 2-[(2R,5Z)-2-carboxy-4-methylthiazol-5(2H)-ylidene]ethyl phosphate. Lys141 serves as a coordination point for 4-amino-2-methyl-5-(diphosphooxymethyl)pyrimidine. Residues Gly170 and Ile190 to Ser191 each bind 2-[(2R,5Z)-2-carboxy-4-methylthiazol-5(2H)-ylidene]ethyl phosphate.

Belongs to the thiamine-phosphate synthase family. Mg(2+) serves as cofactor.

It catalyses the reaction 2-[(2R,5Z)-2-carboxy-4-methylthiazol-5(2H)-ylidene]ethyl phosphate + 4-amino-2-methyl-5-(diphosphooxymethyl)pyrimidine + 2 H(+) = thiamine phosphate + CO2 + diphosphate. It carries out the reaction 2-(2-carboxy-4-methylthiazol-5-yl)ethyl phosphate + 4-amino-2-methyl-5-(diphosphooxymethyl)pyrimidine + 2 H(+) = thiamine phosphate + CO2 + diphosphate. The catalysed reaction is 4-methyl-5-(2-phosphooxyethyl)-thiazole + 4-amino-2-methyl-5-(diphosphooxymethyl)pyrimidine + H(+) = thiamine phosphate + diphosphate. It participates in cofactor biosynthesis; thiamine diphosphate biosynthesis; thiamine phosphate from 4-amino-2-methyl-5-diphosphomethylpyrimidine and 4-methyl-5-(2-phosphoethyl)-thiazole: step 1/1. Functionally, condenses 4-methyl-5-(beta-hydroxyethyl)thiazole monophosphate (THZ-P) and 2-methyl-4-amino-5-hydroxymethyl pyrimidine pyrophosphate (HMP-PP) to form thiamine monophosphate (TMP). This Streptococcus pneumoniae (strain ATCC BAA-255 / R6) protein is Thiamine-phosphate synthase 1.